Consider the following 374-residue polypeptide: Peptide chain release factor 2 (374 aa).

An N5-methylglutamine modification is found at Gln250.

It belongs to the prokaryotic/mitochondrial release factor family. In terms of processing, methylated by PrmC. Methylation increases the termination efficiency of RF2.

The protein localises to the cytoplasm. Peptide chain release factor 2 directs the termination of translation in response to the peptide chain termination codons UGA and UAA. In Roseobacter denitrificans (strain ATCC 33942 / OCh 114) (Erythrobacter sp. (strain OCh 114)), this protein is Peptide chain release factor 2.